A 408-amino-acid chain; its full sequence is Imidazolonepropionase (408 aa).

Fe(3+) contacts are provided by His73 and His75. Positions 73 and 75 each coordinate Zn(2+). 4-imidazolone-5-propanoate-binding residues include Arg82, Tyr145, and His178. Residue Tyr145 coordinates N-formimidoyl-L-glutamate. Fe(3+) is bound at residue His243. His243 lines the Zn(2+) pocket. 4-imidazolone-5-propanoate is bound at residue Gln246. Asp318 lines the Fe(3+) pocket. Asp318 is a Zn(2+) binding site. N-formimidoyl-L-glutamate is bound by residues Asn320 and Gly322. Ser323 is a binding site for 4-imidazolone-5-propanoate.

The protein belongs to the metallo-dependent hydrolases superfamily. HutI family. Requires Zn(2+) as cofactor. Fe(3+) is required as a cofactor.

It is found in the cytoplasm. The enzyme catalyses 4-imidazolone-5-propanoate + H2O = N-formimidoyl-L-glutamate. Its pathway is amino-acid degradation; L-histidine degradation into L-glutamate; N-formimidoyl-L-glutamate from L-histidine: step 3/3. Catalyzes the hydrolytic cleavage of the carbon-nitrogen bond in imidazolone-5-propanoate to yield N-formimidoyl-L-glutamate. It is the third step in the universal histidine degradation pathway. This chain is Imidazolonepropionase, found in Shewanella baltica (strain OS185).